We begin with the raw amino-acid sequence, 256 residues long: DNA repair protein RecO (256 aa).

It belongs to the RecO family.

Its function is as follows. Involved in DNA repair and RecF pathway recombination. The sequence is that of DNA repair protein RecO from Bartonella henselae (strain ATCC 49882 / DSM 28221 / CCUG 30454 / Houston 1) (Rochalimaea henselae).